The primary structure comprises 434 residues: 3-phosphoshikimate 1-carboxyvinyltransferase (434 aa).

3-phosphoshikimate contacts are provided by lysine 22, serine 23, and arginine 27. A phosphoenolpyruvate-binding site is contributed by lysine 22. Residues glycine 93 and arginine 121 each coordinate phosphoenolpyruvate. 3-phosphoshikimate is bound by residues serine 168, serine 169, glutamine 170, serine 199, aspartate 320, and lysine 347. Phosphoenolpyruvate is bound at residue glutamine 170. The active-site Proton acceptor is the aspartate 320. Residues arginine 351, arginine 394, and lysine 419 each coordinate phosphoenolpyruvate.

The protein belongs to the EPSP synthase family. In terms of assembly, monomer.

It is found in the cytoplasm. It carries out the reaction 3-phosphoshikimate + phosphoenolpyruvate = 5-O-(1-carboxyvinyl)-3-phosphoshikimate + phosphate. The protein operates within metabolic intermediate biosynthesis; chorismate biosynthesis; chorismate from D-erythrose 4-phosphate and phosphoenolpyruvate: step 6/7. In terms of biological role, catalyzes the transfer of the enolpyruvyl moiety of phosphoenolpyruvate (PEP) to the 5-hydroxyl of shikimate-3-phosphate (S3P) to produce enolpyruvyl shikimate-3-phosphate and inorganic phosphate. This Burkholderia lata (strain ATCC 17760 / DSM 23089 / LMG 22485 / NCIMB 9086 / R18194 / 383) protein is 3-phosphoshikimate 1-carboxyvinyltransferase.